A 526-amino-acid polypeptide reads, in one-letter code: Lysine--tRNA ligase (526 aa).

2 residues coordinate Mg(2+): E431 and E438.

It belongs to the class-II aminoacyl-tRNA synthetase family. In terms of assembly, homodimer. Mg(2+) serves as cofactor.

It localises to the cytoplasm. The enzyme catalyses tRNA(Lys) + L-lysine + ATP = L-lysyl-tRNA(Lys) + AMP + diphosphate. In Chlamydia trachomatis serovar L2b (strain UCH-1/proctitis), this protein is Lysine--tRNA ligase.